The primary structure comprises 309 residues: tRNA pseudouridine synthase B (309 aa).

Residue Asp45 is the Nucleophile of the active site.

The protein belongs to the pseudouridine synthase TruB family. Type 1 subfamily.

The enzyme catalyses uridine(55) in tRNA = pseudouridine(55) in tRNA. Responsible for synthesis of pseudouridine from uracil-55 in the psi GC loop of transfer RNAs. In Oleidesulfovibrio alaskensis (strain ATCC BAA-1058 / DSM 17464 / G20) (Desulfovibrio alaskensis), this protein is tRNA pseudouridine synthase B.